The primary structure comprises 866 residues: Dimethylglycine dehydrogenase, mitochondrial (866 aa).

Residues 1-50 (MLRPGAQLLRGLLLRSCPLQGSPGRPRSVCGREGEEKPPLSAETQWKDRA) constitute a mitochondrion transit peptide. The interval 20-42 (QGSPGRPRSVCGREGEEKPPLSA) is disordered. Residues 59 to 60 (CV), 80 to 81 (EK), and 87 to 95 (GSTWHAAGL) contribute to the FAD site. Histidine 91 bears the Tele-8alpha-FAD histidine mark. Lysine 114 is subject to N6-acetyllysine. Lysine 148 carries the post-translational modification N6-acetyllysine; alternate. At lysine 148 the chain carries N6-succinyllysine; alternate. Lysine 168 is subject to N6-acetyllysine. Valine 219 serves as a coordination point for FAD. Lysine 223 is modified (N6-acetyllysine). Tryptophan 251 contributes to the FAD binding site. N6-succinyllysine is present on residues lysine 317 and lysine 319. N6-acetyllysine is present on residues lysine 335 and lysine 360. 397-402 (FGYGII) is an FAD binding site. N6-acetyllysine; alternate is present on residues lysine 434 and lysine 523. N6-succinyllysine; alternate is present on residues lysine 434 and lysine 523. 580-582 (ELT) serves as a coordination point for (6S)-5,6,7,8-tetrahydrofolate. At lysine 655 the chain carries N6-acetyllysine; alternate. N6-succinyllysine; alternate is present on lysine 655. (6S)-5,6,7,8-tetrahydrofolate is bound by residues tyrosine 676, 683–685 (ELY), and tyrosine 744. N6-acetyllysine is present on lysine 764. At lysine 795 the chain carries N6-succinyllysine.

It belongs to the GcvT family. Monomer. It depends on FAD as a cofactor.

Its subcellular location is the mitochondrion. The catalysed reaction is (6S)-5,6,7,8-tetrahydrofolyl-(gamma-L-Glu)(n) + N,N-dimethylglycine + oxidized [electron-transfer flavoprotein] + H(+) = (6R)-5,10-methylenetetrahydrofolyl-(gamma-L-Glu)(n) + sarcosine + reduced [electron-transfer flavoprotein]. It functions in the pathway amine and polyamine degradation; betaine degradation; sarcosine from betaine: step 2/2. Functionally, catalyzes the demethylation of N,N-dimethylglycine to sarcosine. Also has activity with sarcosine in vitro. This Homo sapiens (Human) protein is Dimethylglycine dehydrogenase, mitochondrial (DMGDH).